The following is a 247-amino-acid chain: Acyl-coenzyme A thioesterase THEM5 (247 aa).

The active-site Proton donor/acceptor is D167.

It belongs to the THEM4/THEM5 thioesterase family. Homodimer.

The protein resides in the mitochondrion matrix. The enzyme catalyses hexadecanoyl-CoA + H2O = hexadecanoate + CoA + H(+). It carries out the reaction (9Z,12Z)-octadecadienoyl-CoA + H2O = (9Z,12Z)-octadecadienoate + CoA + H(+). The catalysed reaction is tetradecanoyl-CoA + H2O = tetradecanoate + CoA + H(+). It catalyses the reaction (9Z)-octadecenoyl-CoA + H2O = (9Z)-octadecenoate + CoA + H(+). The enzyme catalyses (9Z)-hexadecenoyl-CoA + H2O = (9Z)-hexadecenoate + CoA + H(+). It carries out the reaction (5Z,8Z,11Z,14Z)-eicosatetraenoyl-CoA + H2O = (5Z,8Z,11Z,14Z)-eicosatetraenoate + CoA + H(+). The catalysed reaction is octadecanoyl-CoA + H2O = octadecanoate + CoA + H(+). Functionally, has acyl-CoA thioesterase activity towards long-chain (C16 and C18) fatty acyl-CoA substrates, with a preference for linoleoyl-CoA and other unsaturated long-chain fatty acid-CoA esters. Plays an important role in mitochondrial fatty acid metabolism, and in remodeling of the mitochondrial lipid cardiolipin. Required for normal mitochondrial function. The sequence is that of Acyl-coenzyme A thioesterase THEM5 (THEM5) from Homo sapiens (Human).